The sequence spans 430 residues: Enolase (430 aa).

Gln167 is a (2R)-2-phosphoglycerate binding site. The Proton donor role is filled by Glu209. Asp246, Glu287, and Asp314 together coordinate Mg(2+). Residues Lys339, Arg368, Ser369, and Lys390 each contribute to the (2R)-2-phosphoglycerate site. Lys339 functions as the Proton acceptor in the catalytic mechanism.

Belongs to the enolase family. It depends on Mg(2+) as a cofactor.

The protein resides in the cytoplasm. It localises to the secreted. Its subcellular location is the cell surface. It carries out the reaction (2R)-2-phosphoglycerate = phosphoenolpyruvate + H2O. It participates in carbohydrate degradation; glycolysis; pyruvate from D-glyceraldehyde 3-phosphate: step 4/5. Functionally, catalyzes the reversible conversion of 2-phosphoglycerate (2-PG) into phosphoenolpyruvate (PEP). It is essential for the degradation of carbohydrates via glycolysis. This is Enolase from Prochlorococcus marinus subsp. pastoris (strain CCMP1986 / NIES-2087 / MED4).